The primary structure comprises 322 residues: Methionyl-tRNA formyltransferase (322 aa).

Position 113 to 116 (113 to 116 (SLLP)) interacts with (6S)-5,6,7,8-tetrahydrofolate.

This sequence belongs to the Fmt family.

It catalyses the reaction L-methionyl-tRNA(fMet) + (6R)-10-formyltetrahydrofolate = N-formyl-L-methionyl-tRNA(fMet) + (6S)-5,6,7,8-tetrahydrofolate + H(+). Functionally, attaches a formyl group to the free amino group of methionyl-tRNA(fMet). The formyl group appears to play a dual role in the initiator identity of N-formylmethionyl-tRNA by promoting its recognition by IF2 and preventing the misappropriation of this tRNA by the elongation apparatus. The polypeptide is Methionyl-tRNA formyltransferase (Blochmanniella pennsylvanica (strain BPEN)).